Reading from the N-terminus, the 81-residue chain is Photosystem I iron-sulfur center (81 aa).

4Fe-4S ferredoxin-type domains lie at 2–31 and 39–68; these read AHSVKVYDTCIGCTQCVRACPCDVLEMVPW and IASAPRTEDCIGCKRCETACPTDFLSVRVY. [4Fe-4S] cluster contacts are provided by Cys11, Cys14, Cys17, Cys21, Cys48, Cys51, Cys54, and Cys58.

In terms of assembly, the eukaryotic PSI reaction center is composed of at least 11 subunits. [4Fe-4S] cluster serves as cofactor.

It is found in the plastid. The protein resides in the chloroplast thylakoid membrane. The enzyme catalyses reduced [plastocyanin] + hnu + oxidized [2Fe-2S]-[ferredoxin] = oxidized [plastocyanin] + reduced [2Fe-2S]-[ferredoxin]. Functionally, apoprotein for the two 4Fe-4S centers FA and FB of photosystem I (PSI); essential for photochemical activity. FB is the terminal electron acceptor of PSI, donating electrons to ferredoxin. The C-terminus interacts with PsaA/B/D and helps assemble the protein into the PSI complex. Required for binding of PsaD and PsaE to PSI. PSI is a plastocyanin/cytochrome c6-ferredoxin oxidoreductase, converting photonic excitation into a charge separation, which transfers an electron from the donor P700 chlorophyll pair to the spectroscopically characterized acceptors A0, A1, FX, FA and FB in turn. The sequence is that of Photosystem I iron-sulfur center from Pyropia yezoensis (Susabi-nori).